The primary structure comprises 334 residues: MMRSEPRALQLNEHGQLKHFLTLDGLDKTILTEILDRADSFLSMGEQSVKKVPLLRGKTVVNLFFENSTRTRTTFELAAKRLSADVINLNIETSATSKGESLLDTLKNLEAMQSDMFIVRHSDSGAAHFIAEHCTPNVAIINAGDGRHAHPTQAMLDMLTIRRHKGSFDGLKIAIVGDILHSRVARSQLQALTTLGVSDVRLVGPKTLVPSFFEEMGATICHDLEAGLKDVDVVVMLRLQKERMKGALLPSESEFYRLYGLTEETLAWAKPDAIVMHPGPINRGVEISSEVADGKHSVILNQVTNGIAVRMAVMSMAMSGQLQSDETPAAKDEK.

The carbamoyl phosphate site is built by R70 and T71. Residue K98 participates in L-aspartate binding. Residues R120, H150, and Q153 each contribute to the carbamoyl phosphate site. L-aspartate contacts are provided by R183 and R238. Residues G279 and P280 each contribute to the carbamoyl phosphate site.

The protein belongs to the aspartate/ornithine carbamoyltransferase superfamily. ATCase family. In terms of assembly, heterododecamer (2C3:3R2) of six catalytic PyrB chains organized as two trimers (C3), and six regulatory PyrI chains organized as three dimers (R2).

It carries out the reaction carbamoyl phosphate + L-aspartate = N-carbamoyl-L-aspartate + phosphate + H(+). Its pathway is pyrimidine metabolism; UMP biosynthesis via de novo pathway; (S)-dihydroorotate from bicarbonate: step 2/3. Its function is as follows. Catalyzes the condensation of carbamoyl phosphate and aspartate to form carbamoyl aspartate and inorganic phosphate, the committed step in the de novo pyrimidine nucleotide biosynthesis pathway. This chain is Aspartate carbamoyltransferase catalytic subunit, found in Marinomonas sp. (strain MWYL1).